A 327-amino-acid polypeptide reads, in one-letter code: Malate dehydrogenase (327 aa).

12 to 18 contributes to the NAD(+) binding site; sequence GAAGQIA. 2 residues coordinate substrate: arginine 93 and arginine 99. NAD(+) contacts are provided by residues asparagine 106, glutamine 113, and 130 to 132; that span reads VGN. Positions 132 and 163 each coordinate substrate. The active-site Proton acceptor is the histidine 188.

The protein belongs to the LDH/MDH superfamily. MDH type 2 family.

The enzyme catalyses (S)-malate + NAD(+) = oxaloacetate + NADH + H(+). Functionally, catalyzes the reversible oxidation of malate to oxaloacetate. The chain is Malate dehydrogenase from Burkholderia mallei (strain NCTC 10247).